A 721-amino-acid chain; its full sequence is Cell wall protein RBT1 (721 aa).

The signal sequence occupies residues 1–20 (MRFATAQLAALAYYILSTEA). The region spanning 55–278 (GSKNKREAEI…DCQCDTPSPS (224 aa)) is the Flo11 domain. Disordered stretches follow at residues 278 to 410 (STTT…LTTT), 453 to 510 (LTET…TVTE), and 555 to 666 (TPAT…ALVS). The span at 454-499 (TETTPVPSSVDSTSVTSAPETTPESTAPESSAPESSAPESSAPVTE) shows a compositional bias: low complexity. Positions 500 to 510 (TPTGPVSTVTE) are enriched in polar residues. Low complexity-rich tracts occupy residues 555 to 575 (TPAT…VPAT) and 584 to 663 (SSAP…KTSA). The GPI-anchor amidated serine moiety is linked to residue Ser-696. Residues 697 to 721 (SFEGAGNNMRLTYGAAIIGLAAFLI) constitute a propeptide, removed in mature form.

It belongs to the HWP1 family. Post-translationally, the GPI-anchor is attached to the protein in the endoplasmic reticulum and serves to target the protein to the cell surface. There, the glucosamine-inositol phospholipid moiety is cleaved off and the GPI-modified mannoprotein is covalently attached via its lipidless GPI glycan remnant to the 1,6-beta-glucan of the outer cell wall layer.

The protein localises to the secreted. Its subcellular location is the cell wall. The protein resides in the membrane. Functionally, GPI-anchored cell wall protein required for mating efficiency, biofilm formation, and virulence. Involved in normal disseminated infection, but not in intestinal colonization. This is Cell wall protein RBT1 (RBT1) from Candida albicans (strain SC5314 / ATCC MYA-2876) (Yeast).